The primary structure comprises 281 residues: Transcription factor bHLH79 (281 aa).

The disordered stretch occupies residues 47 to 167 (FTRSEHSGNK…GQATDRHSLA (121 aa)). Composition is skewed to basic and acidic residues over residues 77–88 (KTRDLNSEDDSS) and 138–152 (TEQK…DYIH). The bHLH domain maps to 159 to 209 (QATDRHSLAERARREKISEKMTALQDIIPGCNKIIGKALVLDEIINYIQSL).

As to quaternary structure, homodimer.

The protein resides in the nucleus. This chain is Transcription factor bHLH79 (BHLH79), found in Arabidopsis thaliana (Mouse-ear cress).